The primary structure comprises 192 residues: Calcium-binding protein K (192 aa).

EF-hand domains follow at residues 60–95 and 96–131; these read WDEA…MAKA and PTLD…VVCC. Ca(2+) contacts are provided by aspartate 73, aspartate 75, asparagine 77, glutamate 84, aspartate 109, aspartate 111, serine 113, tyrosine 115, and glutamate 120.

The protein belongs to the recoverin family.

This Dictyostelium discoideum (Social amoeba) protein is Calcium-binding protein K (cbpK).